An 87-amino-acid chain; its full sequence is U3-theraphotoxin-Hhn1a 3 (87 aa).

A signal peptide spans 1–24 (MVNMKASMFLTFAGLVLLFVVCYA). Positions 25–52 (PESEEKEFPKEMLSSIFAVDNDFKQEER) are excised as a propeptide. Disulfide bonds link C54–C67, C61–C72, and C66–C79.

This sequence belongs to the neurotoxin 10 (Hwtx-1) family. 51 (Hntx-8) subfamily. Hntx-8 sub-subfamily. As to expression, expressed by the venom gland.

Its subcellular location is the secreted. Functionally, ion channel inhibitor. The sequence is that of U3-theraphotoxin-Hhn1a 3 from Cyriopagopus hainanus (Chinese bird spider).